We begin with the raw amino-acid sequence, 600 residues long: Glutamine--fructose-6-phosphate aminotransferase [isomerizing] (600 aa).

Residue Cys2 is the Nucleophile; for GATase activity of the active site. The Glutamine amidotransferase type-2 domain maps to 2–217 (CGIVGFIGEQ…DKEIVIVTKE (216 aa)). 2 consecutive SIS domains span residues 283-422 (IRNA…AKGE) and 452-590 (LAKQ…VDKP). Catalysis depends on Lys595, which acts as the For Fru-6P isomerization activity.

Homodimer.

Its subcellular location is the cytoplasm. It catalyses the reaction D-fructose 6-phosphate + L-glutamine = D-glucosamine 6-phosphate + L-glutamate. Its function is as follows. Catalyzes the first step in hexosamine metabolism, converting fructose-6P into glucosamine-6P using glutamine as a nitrogen source. The sequence is that of Glutamine--fructose-6-phosphate aminotransferase [isomerizing] from Bacillus cereus (strain ATCC 10987 / NRS 248).